A 113-amino-acid polypeptide reads, in one-letter code: Cell division topological specificity factor (113 aa).

It belongs to the MinE family.

In terms of biological role, prevents the cell division inhibition by proteins MinC and MinD at internal division sites while permitting inhibition at polar sites. This ensures cell division at the proper site by restricting the formation of a division septum at the midpoint of the long axis of the cell. This chain is Cell division topological specificity factor, found in Methylobacterium radiotolerans (strain ATCC 27329 / DSM 1819 / JCM 2831 / NBRC 15690 / NCIMB 10815 / 0-1).